A 478-amino-acid polypeptide reads, in one-letter code: Ribulose bisphosphate carboxylase large chain (478 aa).

Positions 1–2 (MS) are excised as a propeptide. N-acetylproline is present on proline 3. Lysine 14 is modified (N6,N6,N6-trimethyllysine). Residues asparagine 123 and threonine 173 each contribute to the substrate site. Lysine 175 functions as the Proton acceptor in the catalytic mechanism. Position 177 (lysine 177) interacts with substrate. The Mg(2+) site is built by lysine 201, aspartate 203, and glutamate 204. Residue lysine 201 is modified to N6-carboxylysine. Histidine 294 functions as the Proton acceptor in the catalytic mechanism. The substrate site is built by arginine 295, histidine 327, and serine 379.

The protein belongs to the RuBisCO large chain family. Type I subfamily. As to quaternary structure, heterohexadecamer of 8 large chains and 8 small chains; disulfide-linked. The disulfide link is formed within the large subunit homodimers. Requires Mg(2+) as cofactor. Post-translationally, the disulfide bond which can form in the large chain dimeric partners within the hexadecamer appears to be associated with oxidative stress and protein turnover.

The protein resides in the plastid. It localises to the chloroplast. It catalyses the reaction 2 (2R)-3-phosphoglycerate + 2 H(+) = D-ribulose 1,5-bisphosphate + CO2 + H2O. The catalysed reaction is D-ribulose 1,5-bisphosphate + O2 = 2-phosphoglycolate + (2R)-3-phosphoglycerate + 2 H(+). In terms of biological role, ruBisCO catalyzes two reactions: the carboxylation of D-ribulose 1,5-bisphosphate, the primary event in carbon dioxide fixation, as well as the oxidative fragmentation of the pentose substrate in the photorespiration process. Both reactions occur simultaneously and in competition at the same active site. In Lemna minor (Common duckweed), this protein is Ribulose bisphosphate carboxylase large chain.